We begin with the raw amino-acid sequence, 156 residues long: Regulatory protein RecX (156 aa).

It belongs to the RecX family.

It localises to the cytoplasm. In terms of biological role, modulates RecA activity. In Pseudomonas putida (strain ATCC 700007 / DSM 6899 / JCM 31910 / BCRC 17059 / LMG 24140 / F1), this protein is Regulatory protein RecX.